We begin with the raw amino-acid sequence, 62 residues long: Large ribosomal subunit protein uL30 (62 aa).

This sequence belongs to the universal ribosomal protein uL30 family. Part of the 50S ribosomal subunit.

In Nitrosospira multiformis (strain ATCC 25196 / NCIMB 11849 / C 71), this protein is Large ribosomal subunit protein uL30.